The primary structure comprises 255 residues: Biotin carboxyl carrier protein of acetyl-CoA carboxylase 2, chloroplastic (255 aa).

Residues 1–87 constitute a chloroplast transit peptide; it reads MASLSVPCVK…TNVPEPAELS (87 aa). The disordered stretch occupies residues 148–193; it reads PPAQPVALPPSPTPTSTPATAKPTSAPSSSHPPLKSPMAGTFYRSP. Positions 149 to 162 are enriched in pro residues; sequence PAQPVALPPSPTPT. The segment covering 163-180 has biased composition (low complexity); that stretch reads STPATAKPTSAPSSSHPP. Positions 178–254 constitute a Biotinyl-binding domain; that stretch reads HPPLKSPMAG…SVDTPLFVIA (77 aa). Residue K220 is modified to N6-biotinyllysine.

As to quaternary structure, acetyl-CoA carboxylase is a heterohexamer composed of biotin carboxyl carrier protein, biotin carboxylase and 2 subunits each of ACCase subunit alpha and ACCase plastid-coded subunit beta (accD). Primarily expressed in 7 to 10 days after flowering seeds at levels approximately 2-fold less abundant than BCCP1.

It is found in the plastid. The protein resides in the chloroplast. Its pathway is lipid metabolism; fatty acid biosynthesis. Functionally, this protein is a component of the acetyl coenzyme A carboxylase complex; first, biotin carboxylase catalyzes the carboxylation of the carrier protein and then the transcarboxylase transfers the carboxyl group to form malonyl-CoA. This is Biotin carboxyl carrier protein of acetyl-CoA carboxylase 2, chloroplastic (BCCP2) from Arabidopsis thaliana (Mouse-ear cress).